The following is a 160-amino-acid chain: 2-amino-4-hydroxy-6-hydroxymethyldihydropteridine pyrophosphokinase (160 aa).

The protein belongs to the HPPK family. Monomer.

It carries out the reaction 6-hydroxymethyl-7,8-dihydropterin + ATP = (7,8-dihydropterin-6-yl)methyl diphosphate + AMP + H(+). It functions in the pathway cofactor biosynthesis; tetrahydrofolate biosynthesis; 2-amino-4-hydroxy-6-hydroxymethyl-7,8-dihydropteridine diphosphate from 7,8-dihydroneopterin triphosphate: step 4/4. Functionally, catalyzes the transfer of pyrophosphate from adenosine triphosphate (ATP) to 6-hydroxymethyl-7,8-dihydropterin, an enzymatic step in folate biosynthesis pathway. This chain is 2-amino-4-hydroxy-6-hydroxymethyldihydropteridine pyrophosphokinase (folK), found in Haemophilus influenzae (strain ATCC 51907 / DSM 11121 / KW20 / Rd).